Here is a 152-residue protein sequence, read N- to C-terminus: MYCPFCHNEQSRVIDSRVIDSGTSIRRRRECAACKGRFTTIEKAVLSVVKRNGLAEPFSRDKLIRGVKRACQGRDVSDDALKKLAQEVEETVRSHGSSQVNANDIGLAILEPLRDLDEVAYLRFASVYKSFESADDFESEIRLMRRRDRDSF.

The segment at 3-34 (CPFCHNEQSRVIDSRVIDSGTSIRRRRECAAC) is a zinc-finger region. The ATP-cone domain occupies 46–136 (LSVVKRNGLA…VYKSFESADD (91 aa)).

Belongs to the NrdR family. Zn(2+) is required as a cofactor.

Negatively regulates transcription of bacterial ribonucleotide reductase nrd genes and operons by binding to NrdR-boxes. The chain is Transcriptional repressor NrdR from Corynebacterium aurimucosum (strain ATCC 700975 / DSM 44827 / CIP 107346 / CN-1) (Corynebacterium nigricans).